We begin with the raw amino-acid sequence, 117 residues long: G antigen 1 (117 aa).

The tract at residues 1–117 (MSWRGRSTYY…PEEGEGQSQC (117 aa)) is disordered. 2 stretches are compositionally biased toward acidic residues: residues 32 to 45 (FSDE…EEGE) and 87 to 96 (ECEDGPDGQE).

It belongs to the GAGE family. Expressed in a variety of tumor tissues but not in normal tissues, except testis.

In terms of biological role, antigen, recognized on melanoma by autologous cytolytic T-lymphocytes. The polypeptide is G antigen 1 (Homo sapiens (Human)).